The following is a 177-amino-acid chain: Large ribosomal subunit protein uL6 (177 aa).

This sequence belongs to the universal ribosomal protein uL6 family. As to quaternary structure, part of the 50S ribosomal subunit.

In terms of biological role, this protein binds to the 23S rRNA, and is important in its secondary structure. It is located near the subunit interface in the base of the L7/L12 stalk, and near the tRNA binding site of the peptidyltransferase center. The chain is Large ribosomal subunit protein uL6 from Citrobacter koseri (strain ATCC BAA-895 / CDC 4225-83 / SGSC4696).